The chain runs to 194 residues: CASP-like protein 4C1 (194 aa).

Topologically, residues 1–35 are cytoplasmic; the sequence is MRSPHAFRNGESPTLRDHTHFHSTVTAQKLRRFNS. A helical transmembrane segment spans residues 36 to 56; the sequence is LILLLRLASFSFSLASAVFML. Over 57–74 the chain is Extracellular; that stretch reads TNSRGSASPHWYDFDAFR. The chain crosses the membrane as a helical span at residues 75–95; the sequence is FVFVANAIVALYSVFEMGTCV. The Cytoplasmic portion of the chain corresponds to 96 to 114; the sequence is WEFSRETTLWPEAFQVWFD. Residues 115 to 135 form a helical membrane-spanning segment; the sequence is FGHDQVFSYLLLSAGSAAAAL. Residues 136–157 are Extracellular-facing; that stretch reads ARTMRGGDTCTANKAFCLQSDV. A helical membrane pass occupies residues 158 to 178; sequence AIGLGFAAFLFLAFSSCFSGF. Residues 179-194 lie on the Cytoplasmic side of the membrane; sequence RVACFLITGSRFHLYS.

Belongs to the Casparian strip membrane proteins (CASP) family. As to quaternary structure, homodimer and heterodimers.

It is found in the cell membrane. This Arabidopsis thaliana (Mouse-ear cress) protein is CASP-like protein 4C1.